We begin with the raw amino-acid sequence, 138 residues long: Thioredoxin H2-1 (138 aa).

Positions 1-20 (MGGAFSTSKPKPAAGEEGGE) are disordered. The region spanning 12–129 (PAAGEEGGES…LEKTINTLRS (118 aa)) is the Thioredoxin domain. Catalysis depends on nucleophile residues C55 and C58. A disulfide bond links C55 and C58.

It belongs to the thioredoxin family. Plant H-type subfamily.

It is found in the cytoplasm. Probable thiol-disulfide oxidoreductase that may be involved in the redox regulation of a number of cytosolic enzymes. This chain is Thioredoxin H2-1, found in Oryza sativa subsp. japonica (Rice).